Reading from the N-terminus, the 179-residue chain is Large ribosomal subunit protein uL5 (179 aa).

The protein belongs to the universal ribosomal protein uL5 family. As to quaternary structure, part of the 50S ribosomal subunit; part of the 5S rRNA/L5/L18/L25 subcomplex. Contacts the 5S rRNA and the P site tRNA. Forms a bridge to the 30S subunit in the 70S ribosome.

This is one of the proteins that bind and probably mediate the attachment of the 5S RNA into the large ribosomal subunit, where it forms part of the central protuberance. In the 70S ribosome it contacts protein S13 of the 30S subunit (bridge B1b), connecting the 2 subunits; this bridge is implicated in subunit movement. Contacts the P site tRNA; the 5S rRNA and some of its associated proteins might help stabilize positioning of ribosome-bound tRNAs. The protein is Large ribosomal subunit protein uL5 of Neisseria meningitidis serogroup A / serotype 4A (strain DSM 15465 / Z2491).